Here is a 179-residue protein sequence, read N- to C-terminus: Adenine phosphoribosyltransferase (179 aa).

The protein belongs to the purine/pyrimidine phosphoribosyltransferase family. Homodimer.

Its subcellular location is the cytoplasm. It carries out the reaction AMP + diphosphate = 5-phospho-alpha-D-ribose 1-diphosphate + adenine. It participates in purine metabolism; AMP biosynthesis via salvage pathway; AMP from adenine: step 1/1. Its function is as follows. Catalyzes a salvage reaction resulting in the formation of AMP, that is energically less costly than de novo synthesis. The chain is Adenine phosphoribosyltransferase from Gluconobacter oxydans (strain 621H) (Gluconobacter suboxydans).